Reading from the N-terminus, the 394-residue chain is Elongation factor Tu (394 aa).

A tr-type G domain is found at Lys-10–Glu-204. The segment at Gly-19–Thr-26 is G1. Gly-19 to Thr-26 contacts GTP. Thr-26 lines the Mg(2+) pocket. Residues Gly-60–Asn-64 form a G2 region. The tract at residues Asp-81 to Gly-84 is G3. Residues Asp-81–His-85 and Asn-136–Asp-139 contribute to the GTP site. The segment at Asn-136 to Asp-139 is G4. Positions Ser-174–Leu-176 are G5.

This sequence belongs to the TRAFAC class translation factor GTPase superfamily. Classic translation factor GTPase family. EF-Tu/EF-1A subfamily. In terms of assembly, monomer.

It is found in the cytoplasm. The catalysed reaction is GTP + H2O = GDP + phosphate + H(+). In terms of biological role, GTP hydrolase that promotes the GTP-dependent binding of aminoacyl-tRNA to the A-site of ribosomes during protein biosynthesis. This Staphylococcus haemolyticus (strain JCSC1435) protein is Elongation factor Tu.